The chain runs to 324 residues: tRNA U34 carboxymethyltransferase (324 aa).

Residues lysine 92, tryptophan 106, lysine 111, glycine 131, 153–155 (DPS), methionine 197, tyrosine 201, and arginine 316 each bind carboxy-S-adenosyl-L-methionine.

This sequence belongs to the class I-like SAM-binding methyltransferase superfamily. CmoB family. As to quaternary structure, homotetramer.

The catalysed reaction is carboxy-S-adenosyl-L-methionine + 5-hydroxyuridine(34) in tRNA = 5-carboxymethoxyuridine(34) in tRNA + S-adenosyl-L-homocysteine + H(+). Catalyzes carboxymethyl transfer from carboxy-S-adenosyl-L-methionine (Cx-SAM) to 5-hydroxyuridine (ho5U) to form 5-carboxymethoxyuridine (cmo5U) at position 34 in tRNAs. The chain is tRNA U34 carboxymethyltransferase from Hahella chejuensis (strain KCTC 2396).